A 573-amino-acid polypeptide reads, in one-letter code: Protein FAM227B (573 aa).

A coiled-coil region spans residues 429 to 485 (DNKKDFKRVKQRIKDDIKFLKEQQEQIDKELDRLQAKASKNLQEVKNDFENFLHKLR). Low complexity predominate over residues 497-521 (SASPSESLQSLQSPNSSLSSPAMSE). Residues 497-528 (SASPSESLQSLQSPNSSLSSPAMSEDFNSVEE) are disordered.

This sequence belongs to the FAM227 family.

The polypeptide is Protein FAM227B (Fam227b) (Rattus norvegicus (Rat)).